The chain runs to 509 residues: 2-isopropylmalate synthase (509 aa).

A Pyruvate carboxyltransferase domain is found at 5-267 (IQIFDTTLRD…QTALNLEETK (263 aa)). Mn(2+) contacts are provided by Asp14, His202, His204, and Asn238. Positions 391 to 509 (KLETLQLQYV…AAENVEKVGN (119 aa)) are regulatory domain.

It belongs to the alpha-IPM synthase/homocitrate synthase family. LeuA type 1 subfamily. As to quaternary structure, homodimer. Requires Mn(2+) as cofactor.

It is found in the cytoplasm. The catalysed reaction is 3-methyl-2-oxobutanoate + acetyl-CoA + H2O = (2S)-2-isopropylmalate + CoA + H(+). Its pathway is amino-acid biosynthesis; L-leucine biosynthesis; L-leucine from 3-methyl-2-oxobutanoate: step 1/4. Catalyzes the condensation of the acetyl group of acetyl-CoA with 3-methyl-2-oxobutanoate (2-ketoisovalerate) to form 3-carboxy-3-hydroxy-4-methylpentanoate (2-isopropylmalate). This chain is 2-isopropylmalate synthase, found in Staphylococcus aureus (strain MRSA252).